The following is a 171-amino-acid chain: Large ribosomal subunit protein bL17 (171 aa).

Over residues 140-152 the composition is skewed to basic and acidic residues; it reads KREIQTKAREEKR. Residues 140–171 form a disordered region; sequence KREIQTKAREEKRATRKSNSAPVSKETTSKKK. Over residues 156–165 the composition is skewed to polar residues; the sequence is KSNSAPVSKE.

This sequence belongs to the bacterial ribosomal protein bL17 family. As to quaternary structure, part of the 50S ribosomal subunit. Contacts protein L32.

This chain is Large ribosomal subunit protein bL17, found in Leptospira interrogans serogroup Icterohaemorrhagiae serovar copenhageni (strain Fiocruz L1-130).